The following is a 564-amino-acid chain: Periplasmic [NiFe] hydrogenase large subunit (564 aa).

Ni(2+) contacts are provided by Cys72, Cys75, Cys543, and Cys546. A propeptide spanning residues 550–564 (VIEPETNEILKFKVC) is cleaved from the precursor.

This sequence belongs to the [NiFe]/[NiFeSe] hydrogenase large subunit family. In terms of assembly, heterodimer of a large and a small subunit. It depends on Ni(2+) as a cofactor.

It localises to the periplasm. It catalyses the reaction 2 Fe(III)-[cytochrome c3] + H2 = 2 Fe(II)-[cytochrome c3] + 2 H(+). The sequence is that of Periplasmic [NiFe] hydrogenase large subunit (hydB) from Solidesulfovibrio fructosivorans (Desulfovibrio fructosivorans).